The sequence spans 215 residues: Enolase-phosphatase E1 (215 aa).

Residues Asp-11 and Glu-13 each contribute to the Mg(2+) site. Substrate-binding positions include 117–118 and Lys-151; that span reads SS. Residue Asp-174 coordinates Mg(2+).

Belongs to the HAD-like hydrolase superfamily. MasA/MtnC family. Monomer. Requires Mg(2+) as cofactor.

The protein localises to the cytoplasm. It localises to the nucleus. The enzyme catalyses 5-methylsulfanyl-2,3-dioxopentyl phosphate + H2O = 1,2-dihydroxy-5-(methylsulfanyl)pent-1-en-3-one + phosphate. The protein operates within amino-acid biosynthesis; L-methionine biosynthesis via salvage pathway; L-methionine from S-methyl-5-thio-alpha-D-ribose 1-phosphate: step 3/6. It participates in amino-acid biosynthesis; L-methionine biosynthesis via salvage pathway; L-methionine from S-methyl-5-thio-alpha-D-ribose 1-phosphate: step 4/6. Functionally, bifunctional enzyme that catalyzes the enolization of 2,3-diketo-5-methylthiopentyl-1-phosphate (DK-MTP-1-P) into the intermediate 2-hydroxy-3-keto-5-methylthiopentenyl-1-phosphate (HK-MTPenyl-1-P), which is then dephosphorylated to form the acireductone 1,2-dihydroxy-3-keto-5-methylthiopentene (DHK-MTPene). This Schizosaccharomyces japonicus (strain yFS275 / FY16936) (Fission yeast) protein is Enolase-phosphatase E1 (utr4).